The primary structure comprises 468 residues: BTB/POZ domain-containing protein 17 (468 aa).

An N-terminal signal peptide occupies residues Met1–Ala16. In terms of domain architecture, BTB spans Thr51 to Leu120. Positions Val159 to Gln259 constitute a BACK domain.

It localises to the secreted. The polypeptide is BTB/POZ domain-containing protein 17 (btbd17) (Xenopus tropicalis (Western clawed frog)).